Consider the following 132-residue polypeptide: Small ribosomal subunit protein uS8 (132 aa).

The protein belongs to the universal ribosomal protein uS8 family. As to quaternary structure, part of the 30S ribosomal subunit. Contacts proteins S5 and S12.

In terms of biological role, one of the primary rRNA binding proteins, it binds directly to 16S rRNA central domain where it helps coordinate assembly of the platform of the 30S subunit. The sequence is that of Small ribosomal subunit protein uS8 from Clavibacter michiganensis subsp. michiganensis (strain NCPPB 382).